The following is a 208-amino-acid chain: Protein-L-isoaspartate O-methyltransferase (208 aa).

The active site involves serine 59.

Belongs to the methyltransferase superfamily. L-isoaspartyl/D-aspartyl protein methyltransferase family.

Its subcellular location is the cytoplasm. It catalyses the reaction [protein]-L-isoaspartate + S-adenosyl-L-methionine = [protein]-L-isoaspartate alpha-methyl ester + S-adenosyl-L-homocysteine. Its function is as follows. Catalyzes the methyl esterification of L-isoaspartyl residues in peptides and proteins that result from spontaneous decomposition of normal L-aspartyl and L-asparaginyl residues. It plays a role in the repair and/or degradation of damaged proteins. The chain is Protein-L-isoaspartate O-methyltransferase from Vibrio cholerae serotype O1 (strain ATCC 39541 / Classical Ogawa 395 / O395).